An 872-amino-acid chain; its full sequence is Translation initiation factor IF-2 (872 aa).

Residues 130-155 (AEEEAARAAEEEAARLAEEEAARRAA) show a composition bias toward basic and acidic residues. The disordered stretch occupies residues 130–282 (AEEEAARAAE…RERERLKHMQ (153 aa)). Positions 156-181 (EPQSEPEAAAPAAEPVAPTAPVAAAP) are enriched in low complexity. The span at 182 to 194 (APAPATPVAPAQP) shows a compositional bias: pro residues. The segment covering 195-211 (KPVAAAAPAGDATAVPR) has biased composition (low complexity). Positions 271–282 (RARERERLKHMQ) are enriched in basic and acidic residues. The region spanning 371–539 (TRPPVVTVMG…AILLQAEILD (169 aa)) is the tr-type G domain. A G1 region spans residues 380-387 (GHVDHGKT). 380-387 (GHVDHGKT) provides a ligand contact to GTP. The segment at 405-409 (GITQH) is G2. The segment at 427-430 (DTPG) is G3. Residues 427–431 (DTPGH) and 481–484 (NKID) contribute to the GTP site. The tract at residues 481-484 (NKID) is G4. The segment at 517–519 (SAK) is G5.

The protein belongs to the TRAFAC class translation factor GTPase superfamily. Classic translation factor GTPase family. IF-2 subfamily.

The protein localises to the cytoplasm. Functionally, one of the essential components for the initiation of protein synthesis. Protects formylmethionyl-tRNA from spontaneous hydrolysis and promotes its binding to the 30S ribosomal subunits. Also involved in the hydrolysis of GTP during the formation of the 70S ribosomal complex. The protein is Translation initiation factor IF-2 of Paramagnetospirillum magneticum (strain ATCC 700264 / AMB-1) (Magnetospirillum magneticum).